The primary structure comprises 3082 residues: Autotransporter adhesin BadA (3082 aa).

Positions 1–47 (MKKLSVTSKRQYNLYASPISRRLSLLMKLSLETVTVMFLLGASPVLA) are cleaved as a signal peptide. The interval 48–376 (SNLALTGAKN…DAVNVAQLKA (329 aa)) is binds to host cells. The interval 48–2901 (SNLALTGAKN…KVQDIATVAD (2854 aa)) is surface exposed passenger domain. The segment at 53 to 2850 (TGAKNLSQNS…DARHNGVDSK (2798 aa)) is does not bind host cells, no host proangiogenic cytokine induction, collagen or fibronectin, no autoagglutination. The interval 470-2850 (ITGVAEGTDA…DARHNGVDSK (2381 aa)) is required to bind fibronectin, not required for surface expression on bacteria, bacterial autoagglutination, host cell binding, collagen binding or host proangiogenic cytokine induction. The interval 2902–3027 (SAVKYEKDST…VSNLRYYDIP (126 aa)) is outer membrane translocation of the passenger domain. A run of 4 beta stranded transmembrane segments spans residues 3028-3039 (GSLSLSFGTGIW), 3044-3051 (AFAIGAGY), 3055-3065 (DGNIRSNLSIT), and 3070-3082 (QWGV…LRLK). The interval 3028-3082 (GSLSLSFGTGIWRSQSAFAIGAGYTSEDGNIRSNLSITSSGGQWGVGAGITLRLK) is translocator domain.

The protein belongs to the autotransporter-2 (AT-2) (TC 1.B.40) family. In terms of assembly, homotrimer. Crystals of the head region form trimers.

The protein resides in the cell surface. Its subcellular location is the cell outer membrane. Functionally, mediates bacterial adherence to host endothelial cells and host extracellular matrix proteins (collagen type I, III, IV, laminin and fibronectin). Static versus dynamic adherence results differ slightly; in dynamic adherence studies bacteria bind to fixed components under a constant defined flow rate to simulate in vivo infection conditions. Induces secretion of host proangiogenic cytokines such as VEGFA, ADM, IGFBP-3 and IL-8. May prevent bacterial phagocytosis by macrophages. Probably mediates bacterial autoagglutination. Negatively impacts type IV secretion system effectors (VirB/D4 T4SS and its substrate Bep proteins), possibly by preventing close association of host and bacterial cells. This implies the 2 factors are expressed at different times during infection. The protein is Autotransporter adhesin BadA of Bartonella henselae (Rochalimaea henselae).